The following is a 367-amino-acid chain: tRNA/tmRNA (uracil-C(5))-methyltransferase (367 aa).

Residues glutamine 190, tyrosine 218, asparagine 223, glutamate 239, and aspartate 299 each coordinate S-adenosyl-L-methionine. The active-site Nucleophile is the cysteine 324. Glutamate 358 serves as the catalytic Proton acceptor.

Belongs to the class I-like SAM-binding methyltransferase superfamily. RNA M5U methyltransferase family. TrmA subfamily.

It catalyses the reaction uridine(54) in tRNA + S-adenosyl-L-methionine = 5-methyluridine(54) in tRNA + S-adenosyl-L-homocysteine + H(+). It carries out the reaction uridine(341) in tmRNA + S-adenosyl-L-methionine = 5-methyluridine(341) in tmRNA + S-adenosyl-L-homocysteine + H(+). Dual-specificity methyltransferase that catalyzes the formation of 5-methyluridine at position 54 (m5U54) in all tRNAs, and that of position 341 (m5U341) in tmRNA (transfer-mRNA). This chain is tRNA/tmRNA (uracil-C(5))-methyltransferase, found in Pectobacterium atrosepticum (strain SCRI 1043 / ATCC BAA-672) (Erwinia carotovora subsp. atroseptica).